A 209-amino-acid chain; its full sequence is A-type ATP synthase subunit D (209 aa).

This sequence belongs to the V-ATPase D subunit family. In terms of assembly, has multiple subunits, A(3), B(3), C, D, E, F, G, I and K(x); there may be a few other subunits as well.

It is found in the cell membrane. Component of the A-type ATP synthase that produces ATP from ADP in the presence of a proton gradient across the membrane. This chain is A-type ATP synthase subunit D, found in Methanosarcina mazei (strain ATCC BAA-159 / DSM 3647 / Goe1 / Go1 / JCM 11833 / OCM 88) (Methanosarcina frisia).